We begin with the raw amino-acid sequence, 205 residues long: MPPVVKRLGRVDYQPTFQAMQDFTASRTAETPDEIWIVEHPPVYTLGQAGKPEHILRDVGIPLVKIDRGGQVTYHGPGQVVIYLLLDLSRLKIKVRELVTAIEQSVIDLLAEYGITAERRDGAPGVYVGEAKIAALGLRIRNGCSYHGVSLNVDMDLSPFAAINPCGYAGLKVIQTKDFNIPLTAHEAGEQLSQHLLQQLDQKNG.

Residues 29-204 (AETPDEIWIV…HLLQQLDQKN (176 aa)) enclose the BPL/LPL catalytic domain. Residues 68–75 (RGGQVTYH), 135–137 (ALG), and 148–150 (GVS) contribute to the substrate site. The Acyl-thioester intermediate role is filled by cysteine 166.

The protein belongs to the LipB family.

It is found in the cytoplasm. It catalyses the reaction octanoyl-[ACP] + L-lysyl-[protein] = N(6)-octanoyl-L-lysyl-[protein] + holo-[ACP] + H(+). It functions in the pathway protein modification; protein lipoylation via endogenous pathway; protein N(6)-(lipoyl)lysine from octanoyl-[acyl-carrier-protein]: step 1/2. In terms of biological role, catalyzes the transfer of endogenously produced octanoic acid from octanoyl-acyl-carrier-protein onto the lipoyl domains of lipoate-dependent enzymes. Lipoyl-ACP can also act as a substrate although octanoyl-ACP is likely to be the physiological substrate. The protein is Octanoyltransferase of Dechloromonas aromatica (strain RCB).